Reading from the N-terminus, the 148-residue chain is Holo-[acyl-carrier-protein] synthase (148 aa).

Residues aspartate 8 and glutamate 57 each contribute to the Mg(2+) site.

The protein belongs to the P-Pant transferase superfamily. AcpS family. Mg(2+) serves as cofactor.

The protein localises to the cytoplasm. The catalysed reaction is apo-[ACP] + CoA = holo-[ACP] + adenosine 3',5'-bisphosphate + H(+). Transfers the 4'-phosphopantetheine moiety from coenzyme A to a Ser of acyl-carrier-protein. In Ruegeria pomeroyi (strain ATCC 700808 / DSM 15171 / DSS-3) (Silicibacter pomeroyi), this protein is Holo-[acyl-carrier-protein] synthase.